The chain runs to 401 residues: Phosphoglycerate kinase 3, cytosolic (401 aa).

Residues Val24, Asp25, Asn27, Arg41, Ser63, His64, Gly66, Arg67, Arg122, His154, and Arg155 each contribute to the (2R)-3-phosphoglycerate site. Residue Gly200 coordinates ADP. Gly200 is a CDP binding site. Residues Lys202 and Lys206 each contribute to the AMP site. Lys206 is a binding site for ATP. Gly224 serves as a coordination point for ADP. Gly224 is a binding site for CDP. AMP contacts are provided by Gly225 and Gly297. Positions 225, 297, and 321 each coordinate ATP. Gly322 and Phe327 together coordinate CDP. Phe327 contributes to the ADP binding site. Glu328 is a binding site for AMP. ATP contacts are provided by Glu328, Asp359, and Ser360. Residue Asp359 coordinates Mg(2+).

The protein belongs to the phosphoglycerate kinase family. As to quaternary structure, monomer. The cofactor is Mg(2+). In terms of tissue distribution, expressed in roots, leaves and inflorescence.

It is found in the cytoplasm. The catalysed reaction is (2R)-3-phosphoglycerate + ATP = (2R)-3-phospho-glyceroyl phosphate + ADP. It participates in carbohydrate degradation; glycolysis; pyruvate from D-glyceraldehyde 3-phosphate: step 2/5. The polypeptide is Phosphoglycerate kinase 3, cytosolic (Arabidopsis thaliana (Mouse-ear cress)).